Here is a 225-residue protein sequence, read N- to C-terminus: Acidic leucine-rich nuclear phosphoprotein 32-related protein 2 (225 aa).

LRR repeat units follow at residues 39 to 60, 61 to 82, and 87 to 107; these read KLEL…PVLP, ALNY…DVLI, and EIKK…RTLK. Positions 121–161 constitute an LRRCT domain; sequence SSLGLLDDYRVKMFEMIPSLKILDGCDVDGEEVEEEFAAGE. Acidic residues predominate over residues 155–175; sequence EEFAAGEGAEDSDEGDSDEDG. The disordered stretch occupies residues 155-225; sequence EEFAAGEGAE…DEPEAKKSAE (71 aa).

The protein belongs to the ANP32 family.

This Caenorhabditis elegans protein is Acidic leucine-rich nuclear phosphoprotein 32-related protein 2.